Reading from the N-terminus, the 128-residue chain is Fluoride-specific ion channel FluC (128 aa).

Transmembrane regions (helical) follow at residues 5–25 (IVAIFVGAGLGALLRWFLSLA), 35–55 (LGTLASNLIGGYVIGVAAVVF), 67–87 (LFVITGFLGGLTTFSTYSVEV), and 96–116 (FGWALAVAALHLTGSFALTAL). 2 residues coordinate Na(+): Gly75 and Thr78.

It belongs to the fluoride channel Fluc/FEX (TC 1.A.43) family.

The protein localises to the cell inner membrane. It carries out the reaction fluoride(in) = fluoride(out). Na(+) is not transported, but it plays an essential structural role and its presence is essential for fluoride channel function. In terms of biological role, fluoride-specific ion channel. Important for reducing fluoride concentration in the cell, thus reducing its toxicity. The chain is Fluoride-specific ion channel FluC from Burkholderia cenocepacia (strain HI2424).